Reading from the N-terminus, the 203-residue chain is Holliday junction branch migration complex subunit RuvA (203 aa).

Positions 1-64 (MIGRLRGIII…EDAQLLYGFN (64 aa)) are domain I. A domain II region spans residues 65–142 (NKQERTLFKE…KGLHGDLFTP (78 aa)). Residues 143–154 (AADLVLTSPASP) form a flexible linker region. The segment at 155 to 203 (ATDDAEQEAVAALVALGYKPQEASRMVSKIARPDASSETLIREALRAAL) is domain III.

This sequence belongs to the RuvA family. As to quaternary structure, homotetramer. Forms an RuvA(8)-RuvB(12)-Holliday junction (HJ) complex. HJ DNA is sandwiched between 2 RuvA tetramers; dsDNA enters through RuvA and exits via RuvB. An RuvB hexamer assembles on each DNA strand where it exits the tetramer. Each RuvB hexamer is contacted by two RuvA subunits (via domain III) on 2 adjacent RuvB subunits; this complex drives branch migration. In the full resolvosome a probable DNA-RuvA(4)-RuvB(12)-RuvC(2) complex forms which resolves the HJ.

It is found in the cytoplasm. Its function is as follows. The RuvA-RuvB-RuvC complex processes Holliday junction (HJ) DNA during genetic recombination and DNA repair, while the RuvA-RuvB complex plays an important role in the rescue of blocked DNA replication forks via replication fork reversal (RFR). RuvA specifically binds to HJ cruciform DNA, conferring on it an open structure. The RuvB hexamer acts as an ATP-dependent pump, pulling dsDNA into and through the RuvAB complex. HJ branch migration allows RuvC to scan DNA until it finds its consensus sequence, where it cleaves and resolves the cruciform DNA. This Shigella boydii serotype 18 (strain CDC 3083-94 / BS512) protein is Holliday junction branch migration complex subunit RuvA.